The chain runs to 428 residues: MRLEIGNIFIKDIQFGEQTKVENGVLYVNKDEMIKKLSVIEHIKSVDLDIARPGESVRITPVKDVIEPRVKVEGPGGIFPGVISKVETDGSGRTHVLKGAAVVTTGKVVGFQEGIVDMSGVGAEYTPFSKTLNLVVIAEPEDGIEQHRHEEVLRMVGLNAGVYIGEAGRSVTPDEVKVYETDTIFEGAAKYPNLPKVGYVYMLQTQGLLHDTYVYGVDAKKIVPTILYPTEVMDGAILSGNCVSSCDKNPTYVHCNNPMVEELYAMHGKEINFVGVIITNENVYLADKERSSDWTAKLCKFLGLDGAIVSQEGFGNPDTDLIMNCKKIEMEGVKTVISTDEYAGRDGASQSLADADVRANAVVSNGNANMVIVLPPMDKTIGHIQYIDTIAGGFDGSLRADGSIEVEIQAITGATNELGFGYLSAKGY.

Cysteine 242 functions as the Schiff-base intermediate with substrate; via pyruvic acid in the catalytic mechanism. Cysteine 242 bears the Pyruvic acid (Cys) mark.

In terms of assembly, heterohexamer of two alpha, two beta and two gamma subunits. Component of the glycine reductase complex, together with components A and C. PB is substrate specific. Post-translationally, the peptide chain is cleaved into beta and alpha chains, and the alpha chain N-terminal cysteine is deaminated and oxidized to form a reactive pyruvoyl group.

It carries out the reaction acetyl phosphate + [thioredoxin]-disulfide + NH4(+) + H2O = [thioredoxin]-dithiol + glycine + phosphate + H(+). In terms of biological role, in the first step of glycine reductase, the substrate is bound to component PB via a Schiff base intermediate. Then the PB-activated substrate is nucleophilically attacked by the selenol anion of component PA to transform it to a carboxymethylated selenoether and the respective amine. By action of component PC, acetyl phosphate is formed, leaving component PA in its oxidized state. Finally component PA becomes reduced by the thioredoxin system to start a new catalytic cycle of reductive deamination. The polypeptide is Glycine reductase complex component B subunits alpha and beta (grdE) (Peptoclostridium acidaminophilum (Eubacterium acidaminophilum)).